A 549-amino-acid chain; its full sequence is Glucose-6-phosphate isomerase 1 (549 aa).

E358 acts as the Proton donor in catalysis. Residues H389 and K513 contribute to the active site.

This sequence belongs to the GPI family.

Its subcellular location is the cytoplasm. The enzyme catalyses alpha-D-glucose 6-phosphate = beta-D-fructose 6-phosphate. It participates in carbohydrate biosynthesis; gluconeogenesis. It functions in the pathway carbohydrate degradation; glycolysis; D-glyceraldehyde 3-phosphate and glycerone phosphate from D-glucose: step 2/4. Catalyzes the reversible isomerization of glucose-6-phosphate to fructose-6-phosphate. The sequence is that of Glucose-6-phosphate isomerase 1 from Streptomyces avermitilis (strain ATCC 31267 / DSM 46492 / JCM 5070 / NBRC 14893 / NCIMB 12804 / NRRL 8165 / MA-4680).